Consider the following 394-residue polypeptide: UPF0284 protein SYNW1869 (394 aa).

This sequence belongs to the UPF0284 family.

This chain is UPF0284 protein SYNW1869, found in Parasynechococcus marenigrum (strain WH8102).